Here is a 169-residue protein sequence, read N- to C-terminus: MKLNEIRDNEGATKNRMRVGRGIGSGKGKTGGRGVKGQKARTGVSIKGFEGGQMPLHRRLPKRGFNNIHAHDLNEVNLGRVQAAVDAGKLDANAPVTVDALVKAGIIARARDGVKLLGVGELTAKLSFEVTRASKSAVEAVEKAGGSVTTTFAAGVAHRGASEGAVASA.

The span at 1-13 (MKLNEIRDNEGAT) shows a compositional bias: basic and acidic residues. The tract at residues 1-40 (MKLNEIRDNEGATKNRMRVGRGIGSGKGKTGGRGVKGQKA) is disordered. A compositionally biased stretch (gly residues) spans 21 to 35 (RGIGSGKGKTGGRGV).

It belongs to the universal ribosomal protein uL15 family. As to quaternary structure, part of the 50S ribosomal subunit.

Binds to the 23S rRNA. The sequence is that of Large ribosomal subunit protein uL15 from Methylorubrum populi (strain ATCC BAA-705 / NCIMB 13946 / BJ001) (Methylobacterium populi).